The following is a 180-amino-acid chain: RFAHDPMAGGHRMWQMAGLKAQRAQTDVNNKQAAFDAAAKEKADADAALSTAMESRKKKEDNKRDAEGKLNDELAKNKGKIPGLKIDQKIRGQMPERGWTEDDIKNTVSNGATGTSFDKRSPKKTPPDYLGRNDPATVYGSPGKYVVVNDRTGEVTQISDKTDPGWVDDSRIQWGNKNDQ.

Disordered stretches follow at residues 24–143 (AQTD…GSPG) and 155–180 (VTQISDKTDPGWVDDSRIQWGNKNDQ). Residues 54–76 (ESRKKKEDNKRDAEGKLNDELAK) are compositionally biased toward basic and acidic residues. The segment at 74–180 (LAKNKGKIPG…RIQWGNKNDQ (107 aa)) is nuclease. The segment covering 106–116 (NTVSNGATGTS) has biased composition (polar residues). Residues 160-171 (DKTDPGWVDDSR) are compositionally biased toward basic and acidic residues.

It belongs to the colicin/pyosin nuclease family.

Its function is as follows. Colicins are polypeptide toxins produced by and active against E.coli and closely related bacteria. This colicin is an endonuclease. The chain is Colicin-E5 (col) from Escherichia coli.